The primary structure comprises 308 residues: Tetraspanin-12 (308 aa).

Topologically, residues 1–41 are cytoplasmic; that stretch reads MANRRQPVQHRAQQRVYRQSQIRYAPGAGGESEISCCVKYS. Residues 42–62 form a helical membrane-spanning segment; it reads VFSFNVIFFLLGFGLLLFGVW. Over 63-86 the chain is Extracellular; the sequence is AQIEKNTFVNMLSKASKLYLDPTW. The helical transmembrane segment at 87–107 threads the bilayer; the sequence is PLLIVGFLTFIIGFSGCVGSL. At 108-112 the chain is on the cytoplasmic side; it reads RENTS. A helical membrane pass occupies residues 113–133; sequence FLTFYSTLLGLLLIAEFSAGV. Over 134 to 268 the chain is Extracellular; that stretch reads FAYACRDQLD…PKLQLWLNNN (135 aa). Residue Asn-213 is glycosylated (N-linked (GlcNAc...) asparagine). Residues 269–289 traverse the membrane as a helical segment; it reads MLLVAVSMVIIAIIQVLGICF. Residues 290 to 308 lie on the Cytoplasmic side of the membrane; it reads AQNLKSDILAQRAKWYYTH.

This sequence belongs to the tetraspanin (TM4SF) family. May interact with protease sup-17; the interaction promotes sup-17 cell membrane localization. As to expression, expressed in the germline.

The protein resides in the cell membrane. It localises to the cytoplasmic vesicle membrane. The protein localises to the endosome membrane. Its subcellular location is the early endosome membrane. It is found in the late endosome membrane. The protein resides in the recycling endosome membrane. It localises to the golgi apparatus. The protein localises to the trans-Golgi network membrane. Its function is as follows. Functions redundantly with tsp-14 isoform a to regulate body size, embryonic and vulva development. Functions redundantly with tsp-14 (isoforms a and b) to regulate cell fate specification in the postembryonic mesodermal M lineage and male development. May regulate BMP-like Sma/Mab signaling by mediating protease sup-17 trafficking to the cell surface. Together with tsp-14, functions redundantly to maintain cell surface levels of the BMP type II receptor daf-4 (but not BMP type I receptor sma-6), probably by regulating endosomal sorting of receptors and their targeting to degradative lysosomes. Together with tsp-14 involved in maintaining the structural and functional integrity of the endosomal network. Together with tsp-14, probably acts by modulating the activation of glp-1, a Notch-like receptor, to regulate germline maturation. Probably acts by modulating the activation of lin-12, a Notch-like receptor, to regulate cell fate specification such as the anchor cell/ventral uterine precursor cell decision. The chain is Tetraspanin-12 from Caenorhabditis elegans.